The chain runs to 1458 residues: MVKLDIHTLAHHLKQERLYVSSEKQLIQRLNADVLKTAEKLYRTAWIAKQQRINLDRLIITSAEASPAECCQHAKILEDTQFVDGYKQLGFQETAYGEFLSRLRENPRLIASSLVAGEKLNQENTQSVIYTVFTSLYGNCIMQEDESYLLQVLRYLIEFELKESDNPRRLLRRGTCAFSILFKLFSEGLFSAKLFLTATLHEPIMQLLVEDEDHLETDPNKLIERFSPAQQEKLFGEKGSDRFRQKVQEMVDSNEAKLVALVNKFIGYLKQNTYCFPHSLRWIVSQMYKTLSCVDRLEVGEVRAMCTDLLLACFICPAVVNPEQYGIISDAPINEVARFNLMQVGRLLQQLAMTGTEEGDPRTKNSLGKFDKGCVAAFLDVVIGGRAVETPPMSSVNLLEGLSRTVVYISYSQLITLVNFMKSVMSGDQLKEDRMALDNLLANLPQAKPGKSSSLDMTPYSTPQMSPATTPANKKNRLPIATRSRSRSNMLMDLHMDHEGSSQETIQEVQPEEVLVISLGTGPQLTPGMMSENEVLNMQLSDGGQGDVPVDENKLHGKPDKTLRFSLCSDNLEGISEGPSNRSNSVSSLDLEGESVSELGAGPSGSNGVEALQLLEHEQATTQDNLDDKLRKFEIRDMMGLTDDRDISETVSETWSTDVLGSDFDPNVDEDRLQEIAGAAAENVLGSLLCLPGSGSVLLDPCTGSTISETTSEAWSVEVLPSDSEAPDLKQEERLQELESCSGLGSTSDDTDVREVSSRPSTPGLSVVSGISATSEDIPNKIEDLRSECSSDFGGKDSVTSPDMDDIAHGAHQLTSPPSQSESLLAMFDPLSSHEGASAVVRPKVHYARPSHPPPDPPILEGAVGGNEARLPNFGSHVLTAAEMEAFKQRHSYPERLVRSRSSDIVSSVRRPMSDPSWNRRPGNEELPPAAATGATSLVAAPHSSSSSPSKDSSRGETEERKDSDDERSDRSRPWWRKRFVSAMPKAPIPFRKKEKQEKDKDDLGPDRFSTLTDEPSPRLSAQAQVAEDILDKYRNAIKRTSPSEGAMANDESAEVMGDGESAHDSPREEALQNISADDLPDSASQAAHPQDSAFSYRDVKKKLRLALCSADSVAFPVLTHSTRNGLPDHTDPEDNEIVCFLKVQIAEAINLQDKSLMAQLQETMRCVCRFDNRTCRKLLASIAEDYRKRAPYIAYLTRCRQGLQTTQAHLERLLQRVLRDKEVANRYFTTVCVRLLLESKEKKIREFIQDFQKLTAADDKTAQVEDFLQFLYGVMAQDVIWQNASEEQLQDAQLAIERSVMNRIFKLAFYPNQDGDILRDQVLHEHIQRLSKVVTANHRALQIPEVYLREAPWPSAQSEIRTISAYKTPRDKVQCILRMCSTIMNLLSLANEDSVPGADDFVPVLVFVLIKANPPCLLSTVQYISSFYASCLSGEESYWWMQFTAAVEFIKTIDDRK.

Positions 147-385 (SYLLQVLRYL…AAFLDVVIGG (239 aa)) constitute a Ras-GAP domain. Ser-227 is modified (phosphoserine). Residues Thr-390 and Thr-458 each carry the phosphothreonine modification. The segment at 447–475 (AKPGKSSSLDMTPYSTPQMSPATTPANKK) is disordered. The span at 451 to 473 (KSSSLDMTPYSTPQMSPATTPAN) shows a compositional bias: polar residues. Position 460 is a phosphotyrosine (Tyr-460). Phosphoserine is present on Ser-466. At Thr-470 the chain carries Phosphothreonine. Ser-566 and Ser-569 each carry phosphoserine. 3 disordered regions span residues 574-608 (GISE…GSNG), 738-821 (LESC…PSQS), and 846-867 (HYAR…VGGN). Residues 578 to 588 (GPSNRSNSVSS) show a composition bias toward polar residues. Residues Ser-742, Ser-746, and Ser-757 each carry the phosphoserine modification. Residues 758 to 777 (SRPSTPGLSVVSGISATSED) are compositionally biased toward polar residues. Phosphothreonine is present on Thr-762. Residue Ser-766 is modified to Phosphoserine. Residues 778–789 (IPNKIEDLRSEC) are compositionally biased toward basic and acidic residues. Ser-876, Ser-902, Ser-903, Ser-908, and Ser-914 each carry phosphoserine. Residues 888-902 (KQRHSYPERLVRSRS) are compositionally biased toward basic and acidic residues. 2 disordered regions span residues 888–1022 (KQRH…RLSA) and 1039–1072 (KRTS…EEAL). The segment covering 930–951 (AAATGATSLVAAPHSSSSSPSK) has biased composition (low complexity). 2 stretches are compositionally biased toward basic and acidic residues: residues 952–973 (DSSR…DRSR) and 995–1006 (EKQEKDKDDLGP). Position 964 is a phosphoserine (Ser-964). A compositionally biased stretch (polar residues) spans 1010–1022 (STLTDEPSPRLSA). 2 positions are modified to phosphoserine: Ser-1017 and Ser-1044. Residues 1061-1071 (ESAHDSPREEA) are compositionally biased toward basic and acidic residues. Phosphoserine is present on residues Ser-1076 and Ser-1083. Positions 1318–1458 (ILRDQVLHEH…EFIKTIDDRK (141 aa)) constitute a VPS9 domain.

The protein belongs to the GAPVD1 family. Interacts with RAB5A. Interacts with TRIP10/CIP4. In terms of tissue distribution, present in adipocytes and fibroblasts (at protein level). Ubiquitously expressed.

Its subcellular location is the membrane. It localises to the endosome. Its function is as follows. Acts both as a GTPase-activating protein (GAP) and a guanine nucleotide exchange factor (GEF), and participates in various processes such as endocytosis, insulin receptor internalization or LC2A4/GLUT4 trafficking. Acts as a GEF for the Ras-related protein RAB31 by exchanging bound GDP for free GTP, leading to regulate LC2A4/GLUT4 trafficking. In the absence of insulin, it maintains RAB31 in an active state and promotes a futile cycle between LC2A4/GLUT4 storage vesicles and early endosomes, retaining LC2A4/GLUT4 inside the cells. Upon insulin stimulation, it is translocated to the plasma membrane, releasing LC2A4/GLUT4 from intracellular storage vesicles. Also involved in EGFR trafficking and degradation, possibly by promoting EGFR ubiquitination and subsequent degradation by the proteasome. Has GEF activity for Rab5 and GAP activity for Ras. The protein is GTPase-activating protein and VPS9 domain-containing protein 1 (Gapvd1) of Mus musculus (Mouse).